A 556-amino-acid polypeptide reads, in one-letter code: 2,3-bisphosphoglycerate-independent phosphoglycerate mutase (556 aa).

Mn(2+)-binding residues include Asp-25 and Ser-78. The active-site Phosphoserine intermediate is the Ser-78. Substrate-binding positions include His-137, 167–168, Arg-203, Arg-210, 283–286, and Lys-358; these read RD and RADR. Mn(2+) contacts are provided by Asp-427, His-431, Asp-468, His-469, and His-498.

It belongs to the BPG-independent phosphoglycerate mutase family. Monomer. It depends on Mn(2+) as a cofactor. As to expression, found ubiquitously in germinating seed.

It localises to the cytoplasm. It carries out the reaction (2R)-2-phosphoglycerate = (2R)-3-phosphoglycerate. It participates in carbohydrate degradation; glycolysis; pyruvate from D-glyceraldehyde 3-phosphate: step 3/5. Catalyzes the interconversion of 2-phosphoglycerate and 3-phosphoglycerate. In Ricinus communis (Castor bean), this protein is 2,3-bisphosphoglycerate-independent phosphoglycerate mutase.